The sequence spans 672 residues: tRNA 5-methylaminomethyl-2-thiouridine biosynthesis bifunctional protein MnmC (672 aa).

The tract at residues 1–241 (MLKVTTAHIH…KRECLQGFKP (241 aa)) is tRNA (mnm(5)s(2)U34)-methyltransferase. The interval 271 to 672 (IGGGISSLFS…RKLLKGTPVK (402 aa)) is FAD-dependent cmnm(5)s(2)U34 oxidoreductase.

In the N-terminal section; belongs to the methyltransferase superfamily. tRNA (mnm(5)s(2)U34)-methyltransferase family. It in the C-terminal section; belongs to the DAO family. It depends on FAD as a cofactor.

The protein resides in the cytoplasm. The enzyme catalyses 5-aminomethyl-2-thiouridine(34) in tRNA + S-adenosyl-L-methionine = 5-methylaminomethyl-2-thiouridine(34) in tRNA + S-adenosyl-L-homocysteine + H(+). Functionally, catalyzes the last two steps in the biosynthesis of 5-methylaminomethyl-2-thiouridine (mnm(5)s(2)U) at the wobble position (U34) in tRNA. Catalyzes the FAD-dependent demodification of cmnm(5)s(2)U34 to nm(5)s(2)U34, followed by the transfer of a methyl group from S-adenosyl-L-methionine to nm(5)s(2)U34, to form mnm(5)s(2)U34. In Mannheimia succiniciproducens (strain KCTC 0769BP / MBEL55E), this protein is tRNA 5-methylaminomethyl-2-thiouridine biosynthesis bifunctional protein MnmC.